A 584-amino-acid polypeptide reads, in one-letter code: Dihydroxyacetone kinase 1 (584 aa).

Position 2 is an N-acetylserine (serine 2). 2 positions are modified to phosphoserine: serine 2 and serine 5. Positions 7–353 constitute a DhaK domain; that stretch reads EVTDPVNSSL…LNAFTNAPGW (347 aa). Substrate-binding positions include 51-54, lysine 103, and aspartate 108; that span reads GSGH. Catalysis depends on histidine 220, which acts as the Tele-hemiaminal-histidine intermediate. Serine 365 carries the phosphoserine modification. One can recognise a DhaL domain in the interval 386-582; it reads DKFAEWMKSG…LCEFLKGVQS (197 aa). Residues 415–418 and 459–460 contribute to the ATP site; these read DGDC and TS. The residue at position 512 (serine 512) is a Phosphoserine. Residues 514 to 515 and 567 to 569 contribute to the ATP site; these read TM and DPG.

It belongs to the dihydroxyacetone kinase (DAK) family.

It catalyses the reaction dihydroxyacetone + ATP = dihydroxyacetone phosphate + ADP + H(+). The catalysed reaction is D-glyceraldehyde + ATP = D-glyceraldehyde 3-phosphate + ADP + H(+). It functions in the pathway polyol metabolism; glycerol fermentation; glycerone phosphate from glycerol (oxidative route): step 2/2. Functionally, catalyzes both the phosphorylation of dihydroxyacetone and of glyceraldehyde. This Saccharomyces cerevisiae (strain ATCC 204508 / S288c) (Baker's yeast) protein is Dihydroxyacetone kinase 1 (DAK1).